The chain runs to 212 residues: Protein-L-isoaspartate O-methyltransferase (212 aa).

Ser-60 is a catalytic residue.

It belongs to the methyltransferase superfamily. L-isoaspartyl/D-aspartyl protein methyltransferase family.

It is found in the cytoplasm. It carries out the reaction [protein]-L-isoaspartate + S-adenosyl-L-methionine = [protein]-L-isoaspartate alpha-methyl ester + S-adenosyl-L-homocysteine. Its function is as follows. Catalyzes the methyl esterification of L-isoaspartyl residues in peptides and proteins that result from spontaneous decomposition of normal L-aspartyl and L-asparaginyl residues. It plays a role in the repair and/or degradation of damaged proteins. The sequence is that of Protein-L-isoaspartate O-methyltransferase from Methylorubrum populi (strain ATCC BAA-705 / NCIMB 13946 / BJ001) (Methylobacterium populi).